Consider the following 700-residue polypeptide: E3 ubiquitin-protein ligase SspH1 (700 aa).

Positions Met-1–Met-395 are interaction with target proteins. 8 LRR repeats span residues His-217–Leu-238, Arg-239–Gln-257, Gly-258–Leu-279, Gly-280–Pro-297, Ala-298–Leu-319, Gln-320–Pro-337, Gly-338–Ser-360, and Ser-361–Arg-381. Residues Ala-396–Glu-403 are linker. The E3 ubiquitin-protein ligase catalytic domain stretch occupies residues Ala-404–Asn-700. The NEL domain maps to Ala-406–Asn-700. Cys-492 serves as the catalytic Glycyl thioester intermediate.

This sequence belongs to the LRR-containing bacterial E3 ligase family. As to quaternary structure, interacts (via leucine-rich repeat region) with host PKN1 (via the second REM repeat). Post-translationally, ubiquitinated in the presence of host E1 ubiquitin-activating enzyme, E2 ubiquitin-conjugating enzyme and ubiquitin.

Its subcellular location is the secreted. The protein resides in the host cytoplasm. It localises to the host nucleus. It catalyses the reaction S-ubiquitinyl-[E2 ubiquitin-conjugating enzyme]-L-cysteine + [acceptor protein]-L-lysine = [E2 ubiquitin-conjugating enzyme]-L-cysteine + N(6)-ubiquitinyl-[acceptor protein]-L-lysine.. With respect to regulation, exists in an autoinhibited state in the absence of substrate protein, due to interactions of the leucine-rich repeat domain with the catalytic domain. Is activated upon binding to a substrate protein. Functionally, effector proteins function to alter host cell physiology and promote bacterial survival in host tissues. This protein is an E3 ubiquitin-protein ligase that interferes with the host's ubiquitination pathway and targets host proteins for proteasomal degradation. Can ubiquitinate ubiquitin, giving rise to polyubiquitin chains (in vitro). Polyubiquitinates host PKN1, leading to its proteasomal degradation. Down-modulates production of host pro-inflammatory cytokines by inhibiting NF-kappa-B-dependent gene expression; this depends only partially on its E3 ubiquitin-protein ligase activity. This is E3 ubiquitin-protein ligase SspH1 (sspH1) from Salmonella typhimurium (strain 14028s / SGSC 2262).